An 83-amino-acid chain; its full sequence is Short neurotoxin 3FTx-Oxy3 (83 aa).

The first 21 residues, 1–21 (MKTLLLTLVVVTIVCLDLGYT), serve as a signal peptide directing secretion. 4 disulfides stabilise this stretch: Cys24/Cys45, Cys38/Cys62, Cys64/Cys75, and Cys76/Cys81.

The protein belongs to the three-finger toxin family. Short-chain subfamily. Type I alpha-neurotoxin sub-subfamily. As to expression, expressed by the venom gland.

Its subcellular location is the secreted. In terms of biological role, binds to muscle nicotinic acetylcholine receptor (nAChR) and inhibit acetylcholine from binding to the receptor, thereby impairing neuromuscular transmission. This is Short neurotoxin 3FTx-Oxy3 from Oxyuranus microlepidotus (Inland taipan).